Consider the following 385-residue polypeptide: 1-deoxy-D-xylulose 5-phosphate reductoisomerase (385 aa).

The NADPH site is built by threonine 10, glycine 11, serine 12, isoleucine 13, lysine 37, and asparagine 124. Lysine 125 contacts 1-deoxy-D-xylulose 5-phosphate. NADPH is bound at residue glutamate 126. Aspartate 150 contacts Mn(2+). Positions 151, 152, 176, and 199 each coordinate 1-deoxy-D-xylulose 5-phosphate. A Mn(2+)-binding site is contributed by glutamate 152. Residue glycine 205 coordinates NADPH. Residues serine 212, asparagine 217, lysine 218, and glutamate 221 each coordinate 1-deoxy-D-xylulose 5-phosphate. Position 221 (glutamate 221) interacts with Mn(2+).

The protein belongs to the DXR family. It depends on Mg(2+) as a cofactor. Mn(2+) is required as a cofactor.

The enzyme catalyses 2-C-methyl-D-erythritol 4-phosphate + NADP(+) = 1-deoxy-D-xylulose 5-phosphate + NADPH + H(+). Its pathway is isoprenoid biosynthesis; isopentenyl diphosphate biosynthesis via DXP pathway; isopentenyl diphosphate from 1-deoxy-D-xylulose 5-phosphate: step 1/6. Catalyzes the NADPH-dependent rearrangement and reduction of 1-deoxy-D-xylulose-5-phosphate (DXP) to 2-C-methyl-D-erythritol 4-phosphate (MEP). The chain is 1-deoxy-D-xylulose 5-phosphate reductoisomerase from Clostridium botulinum (strain ATCC 19397 / Type A).